Consider the following 435-residue polypeptide: 5-methylthioadenosine/S-adenosylhomocysteine deaminase (435 aa).

Residues H65 and H67 each coordinate Zn(2+). The substrate site is built by E94, R150, and H189. H216 is a binding site for Zn(2+). Substrate contacts are provided by E219 and D304. D304 serves as a coordination point for Zn(2+).

Belongs to the metallo-dependent hydrolases superfamily. MTA/SAH deaminase family. Zn(2+) serves as cofactor.

It catalyses the reaction S-adenosyl-L-homocysteine + H2O + H(+) = S-inosyl-L-homocysteine + NH4(+). The catalysed reaction is S-methyl-5'-thioadenosine + H2O + H(+) = S-methyl-5'-thioinosine + NH4(+). Catalyzes the deamination of 5-methylthioadenosine and S-adenosyl-L-homocysteine into 5-methylthioinosine and S-inosyl-L-homocysteine, respectively. Is also able to deaminate adenosine. This Bacillus cereus (strain ATCC 10987 / NRS 248) protein is 5-methylthioadenosine/S-adenosylhomocysteine deaminase.